The sequence spans 450 residues: MSQKIVILGSGESGVGAALLSKAKGYDTFVSDSSMITEAFIAELQQAGIAFEQGVHSEEKILSAQLIVKSPGIPEKAPIMKLIRSKAIEVISEIEFAYRHIHPGAKFIAITGSNGKTTTTLLTHHILAQLGYSVGLGGNIGTSLARQIIHEKKDVYVLELSSFQLDDMYTFKADVAVLLNITPDHLDRYEYKFENYTASKFRIFQNLTPADYYITYSEDSVIESYKKDHPVDARYVPVSLKQLYSAGAYSDEKTIQIHALDDTVVTCNTEEFPLQGKHNYINIMAALNAAVSIGADIHKSIASIKSFRNAPHRLEFVGSIYGVKFVNDSKATNVDSVWYALDSMKTPVVLIVGGVDKGNDYSQIEALVKEKVHTVVALGKDNSKVLSGFASMVSEIKEAHSMVEAIRIAHDSAKKGDTVLLSPACASFDLFKNYEDRGTQFRNLVIELAG.

112–118 (GSNGKTT) lines the ATP pocket.

This sequence belongs to the MurCDEF family.

It is found in the cytoplasm. It catalyses the reaction UDP-N-acetyl-alpha-D-muramoyl-L-alanine + D-glutamate + ATP = UDP-N-acetyl-alpha-D-muramoyl-L-alanyl-D-glutamate + ADP + phosphate + H(+). Its pathway is cell wall biogenesis; peptidoglycan biosynthesis. Its function is as follows. Cell wall formation. Catalyzes the addition of glutamate to the nucleotide precursor UDP-N-acetylmuramoyl-L-alanine (UMA). This Cytophaga hutchinsonii (strain ATCC 33406 / DSM 1761 / CIP 103989 / NBRC 15051 / NCIMB 9469 / D465) protein is UDP-N-acetylmuramoylalanine--D-glutamate ligase.